Here is a 259-residue protein sequence, read N- to C-terminus: MLPLNVTITQITEESPLVRTFFFDHRFEDMDPGQFVMVWVRGVDEVPMGLSRNNSITVQKVGEATSKLFELKEGDSFGLRGPFGKGFTLPSRGEKVLLIAGGVGAAPLSPYAEAASAAGAEVHTILGARSAGDLLFEWRFEALGDIYASTDDGSKGVKGFVTDVLKGLDVAAYDRIAVCGPEIMMASVFRLLEERKVLEKAEFSLHRYFKCGIGVCGACCIDLSGLRVCKDGPVFSGIQLLGSELGKYSRDASGRRIKI.

The FAD-binding FR-type domain maps to Met-1 to Leu-89. [2Fe-2S] cluster contacts are provided by Cys-211, Cys-216, Cys-219, and Cys-229.

The protein belongs to the PyrK family. Heterotetramer of 2 PyrK and 2 PyrD type B subunits. It depends on [2Fe-2S] cluster as a cofactor. Requires FAD as cofactor.

Its pathway is pyrimidine metabolism; UMP biosynthesis via de novo pathway; orotate from (S)-dihydroorotate (NAD(+) route): step 1/1. Responsible for channeling the electrons from the oxidation of dihydroorotate from the FMN redox center in the PyrD type B subunit to the ultimate electron acceptor NAD(+). The chain is Probable dihydroorotate dehydrogenase B (NAD(+)), electron transfer subunit from Methanosarcina acetivorans (strain ATCC 35395 / DSM 2834 / JCM 12185 / C2A).